Here is a 216-residue protein sequence, read N- to C-terminus: Imidazole glycerol phosphate synthase subunit HisH (216 aa).

The region spanning 2-216 (RVAIIDYGSG…LIANFLKWKP (215 aa)) is the Glutamine amidotransferase type-1 domain. Cys-88 acts as the Nucleophile in catalysis. Active-site residues include His-196 and Glu-198.

In terms of assembly, heterodimer of HisH and HisF.

The protein resides in the cytoplasm. It carries out the reaction 5-[(5-phospho-1-deoxy-D-ribulos-1-ylimino)methylamino]-1-(5-phospho-beta-D-ribosyl)imidazole-4-carboxamide + L-glutamine = D-erythro-1-(imidazol-4-yl)glycerol 3-phosphate + 5-amino-1-(5-phospho-beta-D-ribosyl)imidazole-4-carboxamide + L-glutamate + H(+). The catalysed reaction is L-glutamine + H2O = L-glutamate + NH4(+). It participates in amino-acid biosynthesis; L-histidine biosynthesis; L-histidine from 5-phospho-alpha-D-ribose 1-diphosphate: step 5/9. In terms of biological role, IGPS catalyzes the conversion of PRFAR and glutamine to IGP, AICAR and glutamate. The HisH subunit catalyzes the hydrolysis of glutamine to glutamate and ammonia as part of the synthesis of IGP and AICAR. The resulting ammonia molecule is channeled to the active site of HisF. The protein is Imidazole glycerol phosphate synthase subunit HisH of Brucella abortus biovar 1 (strain 9-941).